Consider the following 711-residue polypeptide: Quinolinate synthase, chloroplastic (711 aa).

Residues 1–41 (MDVSSLAAAAPSLVAPPLHHKPHLAFPPHHPSPARGSIGVR) constitute a chloroplast transit peptide. The interval 17 to 63 (PLHHKPHLAFPPHHPSPARGSIGVRCAHSPSPHPLRPSAATADEEVS) is disordered. C114 serves as the catalytic Cysteine persulfide intermediate. Residues H263 and S289 each coordinate iminosuccinate. C343 is a [4Fe-4S] cluster binding site. Residues 372–374 (YIN) and S394 contribute to the iminosuccinate site. C467 contributes to the [4Fe-4S] cluster binding site. Iminosuccinate-binding positions include 493–495 (HFE) and T518. Residue C631 coordinates [4Fe-4S] cluster.

Belongs to the quinolinate synthase family. Type 1 subfamily. As to quaternary structure, homodimer. Requires [4Fe-4S] cluster as cofactor.

It localises to the plastid. It is found in the chloroplast. It carries out the reaction iminosuccinate + dihydroxyacetone phosphate = quinolinate + phosphate + 2 H2O + H(+). It participates in cofactor biosynthesis; NAD(+) biosynthesis; quinolinate from iminoaspartate: step 1/1. Catalyzes the condensation of iminoaspartate with dihydroxyacetone phosphate to form quinolinate. This chain is Quinolinate synthase, chloroplastic, found in Oryza sativa subsp. japonica (Rice).